We begin with the raw amino-acid sequence, 312 residues long: Ribosomal RNA small subunit methyltransferase H (312 aa).

S-adenosyl-L-methionine-binding positions include 34 to 36 (GGH), Asp-54, Phe-81, Asp-102, and Gln-109.

This sequence belongs to the methyltransferase superfamily. RsmH family.

The protein localises to the cytoplasm. The catalysed reaction is cytidine(1402) in 16S rRNA + S-adenosyl-L-methionine = N(4)-methylcytidine(1402) in 16S rRNA + S-adenosyl-L-homocysteine + H(+). In terms of biological role, specifically methylates the N4 position of cytidine in position 1402 (C1402) of 16S rRNA. This Geotalea uraniireducens (strain Rf4) (Geobacter uraniireducens) protein is Ribosomal RNA small subunit methyltransferase H.